We begin with the raw amino-acid sequence, 455 residues long: Protein 60A (455 aa).

The signal sequence occupies residues 1 to 36 (MSGLRNTSEAVAVLASLGLGMVLLMFVATTPPAVEA). The propeptide occupies 37-335 (TQSGIYIDNG…SASHPRKRKK (299 aa)). The span at 108–118 (GLSDQDEDDDY) shows a compositional bias: acidic residues. A disordered region spans residues 108-138 (GLSDQDEDDDYERGHRSRRSADLEEDEGEQQ). 2 N-linked (GlcNAc...) asparagine glycosylation sites follow: asparagine 238 and asparagine 250. The disordered stretch occupies residues 316-345 (AHSSHHRSKRSASHPRKRKKSVSPNNVPLL). Residues 318 to 336 (SSHHRSKRSASHPRKRKKS) show a composition bias toward basic residues. Cystine bridges form between cysteine 354/cysteine 420, cysteine 383/cysteine 452, and cysteine 387/cysteine 454. Asparagine 396 is a glycosylation site (N-linked (GlcNAc...) asparagine).

It belongs to the TGF-beta family. In terms of assembly, homodimer; disulfide-linked. Interacts with nord and dpp. In terms of tissue distribution, expressed in cells of the developing foregut and hindgut during germ band retraction and later embryonic stages. Expressed in the wing disk, mainly in the posterior compartment in the pteropleural and medial regions extending into the progenitors of the scutellum. High levels are found within the posterior and anterior compartments of the wing pouch and low levels in the hinge region. In the eye/antennal disk, expression is highest anterior to the morphogenetic furrow and in the medial regions with lower levels of expression posterior to the morphogenetic furrow. Expressed throughout the posterior compartment of the leg imaginal disks and within the ventral anterior compartment.

The protein localises to the secreted. Required for the growth of imaginal tissues and for patterning of the adult wing. The sequence is that of Protein 60A (gbb) from Drosophila melanogaster (Fruit fly).